The chain runs to 1398 residues: DNA-directed RNA polymerase subunit beta' (1398 aa).

Residues C71, C73, C86, and C89 each contribute to the Zn(2+) site. 3 residues coordinate Mg(2+): D462, D464, and D466. Zn(2+) is bound by residues C810, C883, C890, and C893. The tract at residues E1377–E1398 is disordered. The span at A1380 to P1392 shows a compositional bias: low complexity.

The protein belongs to the RNA polymerase beta' chain family. In terms of assembly, the RNAP catalytic core consists of 2 alpha, 1 beta, 1 beta' and 1 omega subunit. When a sigma factor is associated with the core the holoenzyme is formed, which can initiate transcription. Requires Mg(2+) as cofactor. Zn(2+) is required as a cofactor.

It carries out the reaction RNA(n) + a ribonucleoside 5'-triphosphate = RNA(n+1) + diphosphate. Its function is as follows. DNA-dependent RNA polymerase catalyzes the transcription of DNA into RNA using the four ribonucleoside triphosphates as substrates. The chain is DNA-directed RNA polymerase subunit beta' from Bradyrhizobium diazoefficiens (strain JCM 10833 / BCRC 13528 / IAM 13628 / NBRC 14792 / USDA 110).